We begin with the raw amino-acid sequence, 234 residues long: MDSTLKHLAIIMDGNGRWAKLKNKARAYGHKKGVKTLKDITIWCANHKLECLTLYAFSTENWKRPKSEVDFLMKMLKKYLKDERSTYLDNNIRFRAIGDLEGFSKELRDTILRLENDTRYFKDFTQVLALNYGSKNELSRAFKSLLENPPNHINNIESLENEISHRLDTHDLPEVDLLLRTGGEMRLSNFLLWQSSYAELFFTPILWPDFTPKDLENIISDFYKRVRKFGELKC.

The active site involves D13. Residue D13 coordinates Mg(2+). Substrate-binding positions include G14–R17, W18, R26, H30, and S58–E60. The Proton acceptor role is filled by N61. Substrate is bound by residues W62, R64, R180, and R186–S188. E199 provides a ligand contact to Mg(2+).

This sequence belongs to the UPP synthase family. Homodimer. Mg(2+) serves as cofactor.

Its function is as follows. Catalyzes the condensation of isopentenyl diphosphate (IPP) with allylic pyrophosphates generating different type of terpenoids. The polypeptide is Isoprenyl transferase (Helicobacter pylori (strain J99 / ATCC 700824) (Campylobacter pylori J99)).